The primary structure comprises 498 residues: Ribose import ATP-binding protein RbsA 1 (498 aa).

ABC transporter domains lie at 7 to 243 (LHIQ…VGRR) and 254 to 496 (PRGE…IGKS). 39-46 (GENGAGKS) serves as a coordination point for ATP.

It belongs to the ABC transporter superfamily. Ribose importer (TC 3.A.1.2.1) family. The complex is composed of an ATP-binding protein (RbsA), two transmembrane proteins (RbsC) and a solute-binding protein (RbsB).

The protein localises to the cell inner membrane. The catalysed reaction is D-ribose(out) + ATP + H2O = D-ribose(in) + ADP + phosphate + H(+). Part of the ABC transporter complex RbsABC involved in ribose import. Responsible for energy coupling to the transport system. The chain is Ribose import ATP-binding protein RbsA 1 from Pasteurella multocida (strain Pm70).